The chain runs to 225 residues: UPF0173 metal-dependent hydrolase Aflv_0488 (225 aa).

It belongs to the UPF0173 family.

The sequence is that of UPF0173 metal-dependent hydrolase Aflv_0488 from Anoxybacillus flavithermus (strain DSM 21510 / WK1).